Here is a 334-residue protein sequence, read N- to C-terminus: Leukocyte cell-derived chemotaxin 1 (334 aa).

Residues 46 to 66 (VVLISGAVLLLFGAIGAFYFW) traverse the membrane as a helical segment. The region spanning 105-201 (GSGAEEAIEV…LCGDLPIFWL (97 aa)) is the BRICHOS domain. C132 and C193 form a disulfide bridge. Positions 211–214 (RERR) are excised as a propeptide. The interval 212–270 (ERREVVRNSAPSTTRRPHSEPRGNAGPGRLSNGTRPNVQDDAEPFNPDNPYHQQEGESM) is disordered. The N-linked (GlcNAc...) asparagine glycan is linked to N243. 4 disulfides stabilise this stretch: C282–C286, C283–C323, C293–C317, and C297–C313.

Belongs to the chondromodulin-1 family. Post-translationally, after cleavage, the post-translationally modified ChM-I is secreted as a glycoprotein. In terms of tissue distribution, detected in the four cardiac valves, valvular interstitial cells and extracellular matrix (at protein level).

It is found in the secreted. Its subcellular location is the extracellular space. It localises to the extracellular matrix. The protein localises to the endomembrane system. Bifunctional growth regulator that stimulates the growth of cultured chondrocytes in the presence of basic fibroblast growth factor (FGF) but inhibits the growth of cultured vascular endothelial cells. May contribute to the rapid growth of cartilage and vascular invasion prior to the replacement of cartilage by bone during endochondral bone development. Inhibits in vitro tube formation and mobilization of endothelial cells. Plays a role as antiangiogenic factor in cardiac valves to suppress neovascularization. In Mus musculus (Mouse), this protein is Leukocyte cell-derived chemotaxin 1.